Consider the following 521-residue polypeptide: Envelope glycoprotein (521 aa).

The first 20 residues, 1–20 (MVDSTIRLVATIFLISLTQQ), serve as a signal peptide directing secretion. Residues asparagine 44, asparagine 158, asparagine 189, and asparagine 396 are each glycosylated (N-linked (GlcNAc...) asparagine; by host). Residues 501–517 (ISWVVVIGVVLVGVCLM) traverse the membrane as a helical segment.

Homooligomer; disulfide-linked (possibly homodimer).

Its subcellular location is the virion membrane. Its function is as follows. Attaches the virus to host cellular receptor and later induces fusion of virion with host membrane. The chain is Envelope glycoprotein (P4) from Dhori virus (strain Indian/1313/61) (Dho).